A 332-amino-acid polypeptide reads, in one-letter code: Cell growth regulator with RING finger domain protein 1 (332 aa).

The segment at cysteine 274–arginine 309 adopts an RING-type zinc-finger fold.

The protein resides in the nucleus. It localises to the endoplasmic reticulum. Able to inhibit growth in several cell lines. The protein is Cell growth regulator with RING finger domain protein 1 (Cgrrf1) of Mus musculus (Mouse).